The following is a 95-amino-acid chain: Progonadoliberin-1 (95 aa).

The first 22 residues, 1 to 22 (MAPQTFALWLLLVGTLLGQGCC), serve as a signal peptide directing secretion. Gln23 is subject to Pyrrolidone carboxylic acid. Gly32 bears the Glycine amide mark.

It belongs to the GnRH family.

It is found in the secreted. Its function is as follows. Stimulates the secretion of gonadotropins. This Morone saxatilis (Striped bass) protein is Progonadoliberin-1 (gnrh1).